A 441-amino-acid polypeptide reads, in one-letter code: Ribosomal protein uS12 methylthiotransferase RimO (441 aa).

The MTTase N-terminal domain maps to 8–118; the sequence is PKIGFVSLGC…VLEHVHHYVP (111 aa). The [4Fe-4S] cluster site is built by Cys-17, Cys-53, Cys-82, Cys-150, Cys-154, and Cys-157. The 238-residue stretch at 136–373 folds into the Radical SAM core domain; the sequence is LTPRHYAYLK…MQLQQQISAE (238 aa). The TRAM domain maps to 376–441; it reads QEKVGREILV…DEYDLWGSRV (66 aa).

The protein belongs to the methylthiotransferase family. RimO subfamily. It depends on [4Fe-4S] cluster as a cofactor.

The protein localises to the cytoplasm. It carries out the reaction L-aspartate(89)-[ribosomal protein uS12]-hydrogen + (sulfur carrier)-SH + AH2 + 2 S-adenosyl-L-methionine = 3-methylsulfanyl-L-aspartate(89)-[ribosomal protein uS12]-hydrogen + (sulfur carrier)-H + 5'-deoxyadenosine + L-methionine + A + S-adenosyl-L-homocysteine + 2 H(+). Catalyzes the methylthiolation of an aspartic acid residue of ribosomal protein uS12. The chain is Ribosomal protein uS12 methylthiotransferase RimO from Escherichia coli (strain UTI89 / UPEC).